The following is a 456-amino-acid chain: Alcohol acyltransferase 1 (456 aa).

Catalysis depends on proton acceptor residues H166 and D382.

This sequence belongs to the plant acyltransferase family. In terms of tissue distribution, expressed in fruit.

The enzyme catalyses 3-(methylsulfanyl)propanoyl-CoA + butan-1-ol = butyl 3-(methylsulfanyl)propanoate + CoA. The catalysed reaction is ethanol + benzoyl-CoA = ethyl benzoate + CoA. It carries out the reaction butan-1-ol + benzoyl-CoA = butyl benzoate + CoA. It catalyses the reaction 2-(methylsulfanyl)acetyl-CoA + butan-1-ol = butyl 2-(methylsulfanyl)acetate + CoA. In terms of biological role, involved in the biosynthesis of volatile esters which confer kiwifruit flavor. Alcohol acyl transferase that can use a wide range of alcohols as substrate to produce esters. Exhibits benzoyl-CoA:alcohol O-acyltransferase activity. The chain is Alcohol acyltransferase 1 from Actinidia deliciosa (Kiwi).